The primary structure comprises 185 residues: Large ribosomal subunit protein uL5 (185 aa).

The protein belongs to the universal ribosomal protein uL5 family. As to quaternary structure, part of the 50S ribosomal subunit; part of the 5S rRNA subcomplex. Contacts the 5S rRNA and the P site tRNA. Forms a bridge to the 30S subunit in the 70S ribosome. In terms of processing, both N-terminus methionine truncation and retention have been observed for this protein. Post-translationally, may be methylated twice, on undetermined residues.

This is one of the proteins that bind and probably mediate the attachment of the 5S RNA into the large ribosomal subunit, where it forms part of the central protuberance. In the 70S ribosome it contacts protein S13 of the 30S subunit (bridge B1b), connecting the 2 subunits; this bridge is implicated in subunit movement. Contacts the P site tRNA; the 5S rRNA and some of its associated proteins might help stabilize positioning of ribosome-bound tRNAs. This Rhodopseudomonas palustris (strain ATCC BAA-98 / CGA009) protein is Large ribosomal subunit protein uL5.